The primary structure comprises 507 residues: Transcription factor CP2 (507 aa).

The region spanning 61–300 is the Grh/CP2 DB domain; sequence ENKILPFQYV…SPGFNSSHNS (240 aa). Positions 133–395 are DNA-binding; sequence EHQQLEGWRW…LFNALKGRMV (263 aa). 2 disordered regions span residues 240 to 268 and 296 to 316; these read PKGA…YQPS and SSHN…QPEP. The span at 241-265 shows a compositional bias: basic and acidic residues; it reads KGADRKQKTDREKMEKRTPQEKEKY.

It belongs to the grh/CP2 family. CP2 subfamily. Component of the SSP (stage selector protein) complex, which appears to be a heteromer of TFCP2 and 2 copies of NFE4.

It localises to the nucleus. May function as a transcription factor. This Xenopus tropicalis (Western clawed frog) protein is Transcription factor CP2 (tfcp2).